A 259-amino-acid chain; its full sequence is Cytochrome c oxidase subunit 3 (259 aa).

A run of 7 helical transmembrane segments spans residues Pro-13–Phe-33, His-36–Trp-56, Gly-80–Phe-100, Phe-125–Ala-145, Ala-160–Met-180, Phe-195–Ile-215, and Ala-237–Trp-257.

It belongs to the cytochrome c oxidase subunit 3 family. As to quaternary structure, component of the cytochrome c oxidase (complex IV, CIV), a multisubunit enzyme composed of a catalytic core of 3 subunits and several supernumerary subunits. The complex exists as a monomer or a dimer and forms supercomplexes (SCs) in the inner mitochondrial membrane with ubiquinol-cytochrome c oxidoreductase (cytochrome b-c1 complex, complex III, CIII).

The protein resides in the mitochondrion inner membrane. The enzyme catalyses 4 Fe(II)-[cytochrome c] + O2 + 8 H(+)(in) = 4 Fe(III)-[cytochrome c] + 2 H2O + 4 H(+)(out). Component of the cytochrome c oxidase, the last enzyme in the mitochondrial electron transport chain which drives oxidative phosphorylation. The respiratory chain contains 3 multisubunit complexes succinate dehydrogenase (complex II, CII), ubiquinol-cytochrome c oxidoreductase (cytochrome b-c1 complex, complex III, CIII) and cytochrome c oxidase (complex IV, CIV), that cooperate to transfer electrons derived from NADH and succinate to molecular oxygen, creating an electrochemical gradient over the inner membrane that drives transmembrane transport and the ATP synthase. Cytochrome c oxidase is the component of the respiratory chain that catalyzes the reduction of oxygen to water. Electrons originating from reduced cytochrome c in the intermembrane space (IMS) are transferred via the dinuclear copper A center (CU(A)) of subunit 2 and heme A of subunit 1 to the active site in subunit 1, a binuclear center (BNC) formed by heme A3 and copper B (CU(B)). The BNC reduces molecular oxygen to 2 water molecules using 4 electrons from cytochrome c in the IMS and 4 protons from the mitochondrial matrix. In Lumbricus terrestris (Common earthworm), this protein is Cytochrome c oxidase subunit 3 (COIII).